Consider the following 419-residue polypeptide: Keratin, type I cytoskeletal 47 kDa (419 aa).

Residues 1–81 (MSFRSSSSYS…SSSFSNFGGN (81 aa)) are head. Residues 82 to 117 (DKQTMQNLNDRLASYLEKVRALEAANADLELKIREW) form a coil 1A region. The region spanning 82–397 (DKQTMQNLND…RLLEGEFGSL (316 aa)) is the IF rod domain. The interval 118–139 (YEKQKGSGIGAGSKDFSKYFEI) is linker 1. The coil 1B stretch occupies residues 140-231 (ISDLRNKILS…KNHEEEMSIA (92 aa)). Positions 232 to 254 (KSSSAGQVNVEMDAAPGIDLNKI) are linker 12. Residues 255–393 (LSDMRADYET…ETYRRLLEGE (139 aa)) form a coil 2 region. Positions 394–419 (FGSLKSSIVQATEVSTSQSSSSSKKD) are tail.

It belongs to the intermediate filament family. As to quaternary structure, heterotetramer of two type I and two type II keratins.

In Xenopus laevis (African clawed frog), this protein is Keratin, type I cytoskeletal 47 kDa (xk81b2).